A 166-amino-acid polypeptide reads, in one-letter code: Large ribosomal subunit protein uL10 (166 aa).

The protein belongs to the universal ribosomal protein uL10 family. As to quaternary structure, part of the ribosomal stalk of the 50S ribosomal subunit. The N-terminus interacts with L11 and the large rRNA to form the base of the stalk. The C-terminus forms an elongated spine to which L12 dimers bind in a sequential fashion forming a multimeric L10(L12)X complex.

Functionally, forms part of the ribosomal stalk, playing a central role in the interaction of the ribosome with GTP-bound translation factors. The protein is Large ribosomal subunit protein uL10 of Azotobacter vinelandii (strain DJ / ATCC BAA-1303).